A 130-amino-acid chain; its full sequence is Large ribosomal subunit protein bL20 (130 aa).

It belongs to the bacterial ribosomal protein bL20 family.

Functionally, binds directly to 23S ribosomal RNA and is necessary for the in vitro assembly process of the 50S ribosomal subunit. It is not involved in the protein synthesizing functions of that subunit. In Clavibacter sepedonicus (Clavibacter michiganensis subsp. sepedonicus), this protein is Large ribosomal subunit protein bL20.